The primary structure comprises 369 residues: MHGESPIKRRESRKIWVGNVPVGGDAPIAVQSMTNTDTNDVAATVAQIQRLVDAGVDIVRVSVPDMDAAEAFGKIKKLVSVPLVADIHFDYKIALRVAELGVDCLRINPGNIGREDRVRAVVDAARDRGIPIRIGVNAGSLEKDLQKKYGEPTPAALVESALRHVEHLDRLDFQDFKVSVKASDVFMAVEAYRLLAKQIIQPLHLGITEAGGLRSGTVKSAVGLGMLLAEGIGDTIRISLAADPVEEVKVGYDILKSLHLRSRGINFIACPSCSRQNFDVVKTMNELEGRLEDLLVPLDVAVIGCVVNGPGEAKESHVGLTGGTPNLVYIDGKPSQKLNNDNLVDELEKLIRQKAAEKAEADAALIARG.

The [4Fe-4S] cluster site is built by Cys270, Cys273, Cys305, and Glu312.

It belongs to the IspG family. The cofactor is [4Fe-4S] cluster.

The enzyme catalyses (2E)-4-hydroxy-3-methylbut-2-enyl diphosphate + oxidized [flavodoxin] + H2O + 2 H(+) = 2-C-methyl-D-erythritol 2,4-cyclic diphosphate + reduced [flavodoxin]. It functions in the pathway isoprenoid biosynthesis; isopentenyl diphosphate biosynthesis via DXP pathway; isopentenyl diphosphate from 1-deoxy-D-xylulose 5-phosphate: step 5/6. Its function is as follows. Converts 2C-methyl-D-erythritol 2,4-cyclodiphosphate (ME-2,4cPP) into 1-hydroxy-2-methyl-2-(E)-butenyl 4-diphosphate. The protein is 4-hydroxy-3-methylbut-2-en-1-yl diphosphate synthase (flavodoxin) of Pseudomonas entomophila (strain L48).